The following is a 263-amino-acid chain: Tropinone reductase homolog At2g29300 (263 aa).

NADP(+) is bound at residue 13–37; sequence LVTGAASGIGYAIVEELAGFGARIH. Ser-146 is a substrate binding site. The active-site Proton acceptor is Tyr-160.

Belongs to the short-chain dehydrogenases/reductases (SDR) family. SDR65C subfamily.

The sequence is that of Tropinone reductase homolog At2g29300 from Arabidopsis thaliana (Mouse-ear cress).